The chain runs to 299 residues: Tryptophan prenyltransferase ComQ (299 aa).

2 residues coordinate Mg(2+): D67 and D71.

This sequence belongs to the FPP/GGPP synthase family. It depends on Mg(2+) as a cofactor.

It localises to the cell membrane. It carries out the reaction L-tryptophyl-[protein] + (2E,6E)-farnesyl diphosphate = (2S,3R)-3-farnesyl-2,3-dihydro-2,N(alpha)-cyclo-L-tryptophyl-[protein] + diphosphate. Functionally, part of a major quorum-sensing system that regulates the development of genetic competence. Involved in the maturation of the competence pheromone ComX. Acts by catalyzing the transfer of a farnesyl group on the ComX pheromone. Shows weak geranylation activity with geranyl diphosphate (GPP). The polypeptide is Tryptophan prenyltransferase ComQ (Bacillus subtilis (strain 168)).